Consider the following 265-residue polypeptide: Protein HesA, vegetative (265 aa).

Belongs to the HesA/MoeB/ThiF family.

The protein is Protein HesA, vegetative (hesA2) of Trichormus variabilis (strain ATCC 29413 / PCC 7937) (Anabaena variabilis).